Consider the following 237-residue polypeptide: Ribonuclease 3 (237 aa).

One can recognise an RNase III domain in the interval 7 to 135 (IKEVEAKLKF…ILGAVYLDGG (129 aa)). Glu-48 provides a ligand contact to Mg(2+). Residue Asp-52 is part of the active site. Residues Asn-121 and Glu-124 each contribute to the Mg(2+) site. Residue Glu-124 is part of the active site. The DRBM domain maps to 160-229 (NPKNRLQQLT…AQEALDANDY (70 aa)).

Belongs to the ribonuclease III family. As to quaternary structure, homodimer. Requires Mg(2+) as cofactor.

It localises to the cytoplasm. It catalyses the reaction Endonucleolytic cleavage to 5'-phosphomonoester.. In terms of biological role, digests double-stranded RNA. Involved in the processing of primary rRNA transcript to yield the immediate precursors to the large and small rRNAs (23S and 16S). Processes some mRNAs, and tRNAs when they are encoded in the rRNA operon. Processes pre-crRNA and tracrRNA of type II CRISPR loci if present in the organism. This Chlamydia felis (strain Fe/C-56) (Chlamydophila felis) protein is Ribonuclease 3.